Consider the following 207-residue polypeptide: Large ribosomal subunit protein uL4 (207 aa).

Positions 45 to 57 (RQGTHSVKNRSTV) are enriched in polar residues. Positions 45–77 (RQGTHSVKNRSTVSGGGRKPWRQKGTGNARQGS) are disordered.

Belongs to the universal ribosomal protein uL4 family. Part of the 50S ribosomal subunit.

Its function is as follows. One of the primary rRNA binding proteins, this protein initially binds near the 5'-end of the 23S rRNA. It is important during the early stages of 50S assembly. It makes multiple contacts with different domains of the 23S rRNA in the assembled 50S subunit and ribosome. Functionally, forms part of the polypeptide exit tunnel. This Oenococcus oeni (strain ATCC BAA-331 / PSU-1) protein is Large ribosomal subunit protein uL4.